The sequence spans 120 residues: NAD(P)H-quinone oxidoreductase subunit 3, chloroplastic (120 aa).

A run of 3 helical transmembrane segments spans residues 7–27 (YDSF…AFSI), 63–83 (YMFA…YPWA), and 89–109 (LGLF…VGLV).

Belongs to the complex I subunit 3 family. In terms of assembly, NDH is composed of at least 16 different subunits, 5 of which are encoded in the nucleus.

The protein resides in the plastid. It is found in the chloroplast thylakoid membrane. It catalyses the reaction a plastoquinone + NADH + (n+1) H(+)(in) = a plastoquinol + NAD(+) + n H(+)(out). The catalysed reaction is a plastoquinone + NADPH + (n+1) H(+)(in) = a plastoquinol + NADP(+) + n H(+)(out). In terms of biological role, NDH shuttles electrons from NAD(P)H:plastoquinone, via FMN and iron-sulfur (Fe-S) centers, to quinones in the photosynthetic chain and possibly in a chloroplast respiratory chain. The immediate electron acceptor for the enzyme in this species is believed to be plastoquinone. Couples the redox reaction to proton translocation, and thus conserves the redox energy in a proton gradient. This Adiantum capillus-veneris (Maidenhair fern) protein is NAD(P)H-quinone oxidoreductase subunit 3, chloroplastic.